Here is a 101-residue protein sequence, read N- to C-terminus: Large ribosomal subunit protein uL24 (101 aa).

The protein belongs to the universal ribosomal protein uL24 family. Part of the 50S ribosomal subunit.

Its function is as follows. One of two assembly initiator proteins, it binds directly to the 5'-end of the 23S rRNA, where it nucleates assembly of the 50S subunit. Functionally, one of the proteins that surrounds the polypeptide exit tunnel on the outside of the subunit. The protein is Large ribosomal subunit protein uL24 of Streptococcus mutans serotype c (strain ATCC 700610 / UA159).